The sequence spans 422 residues: Dihydrolipoyllysine-residue succinyltransferase component of 2-oxoglutarate dehydrogenase complex (422 aa).

In terms of domain architecture, Lipoyl-binding spans 1–76 (MPEVKVPELA…EVGQAIAIIG (76 aa)). N6-lipoyllysine is present on Lys42. Residues 77 to 185 (EGSGNASKEN…SAKEEKKYNQ (109 aa)) are disordered. Composition is skewed to polar residues over residues 80 to 94 (GNAS…TPQQ) and 116 to 130 (NQAN…NATP). A Peripheral subunit-binding (PSBD) domain is found at 127-163 (NATPSARRYARENGVNLAEVSPKTNDVVRKEDIDKKQ). Residues 152–163 (DVVRKEDIDKKQ) show a composition bias toward basic and acidic residues. The segment covering 164 to 176 (QAPASTQTTQQAS) has biased composition (low complexity). Active-site residues include His393 and Asp397.

The protein belongs to the 2-oxoacid dehydrogenase family. As to quaternary structure, forms a 24-polypeptide structural core with octahedral symmetry. Part of the 2-oxoglutarate dehydrogenase (OGDH) complex composed of E1 (2-oxoglutarate dehydrogenase), E2 (dihydrolipoamide succinyltransferase) and E3 (dihydrolipoamide dehydrogenase); the complex contains multiple copies of the three enzymatic components (E1, E2 and E3). The cofactor is (R)-lipoate.

The enzyme catalyses N(6)-[(R)-dihydrolipoyl]-L-lysyl-[protein] + succinyl-CoA = N(6)-[(R)-S(8)-succinyldihydrolipoyl]-L-lysyl-[protein] + CoA. The protein operates within amino-acid degradation; L-lysine degradation via saccharopine pathway; glutaryl-CoA from L-lysine: step 6/6. E2 component of the 2-oxoglutarate dehydrogenase (OGDH) complex which catalyzes the second step in the conversion of 2-oxoglutarate to succinyl-CoA and CO(2). This chain is Dihydrolipoyllysine-residue succinyltransferase component of 2-oxoglutarate dehydrogenase complex (odhB), found in Staphylococcus aureus (strain USA300).